The chain runs to 47 residues: Bifunctional chitinase/lysozyme (47 aa).

In terms of domain architecture, GH18 spans glycine 1–alanine 47.

It belongs to the glycosyl hydrolase 18 family. Chitinase class II subfamily.

Its subcellular location is the secreted. The protein localises to the extracellular space. It catalyses the reaction Random endo-hydrolysis of N-acetyl-beta-D-glucosaminide (1-&gt;4)-beta-linkages in chitin and chitodextrins.. The enzyme catalyses Hydrolysis of (1-&gt;4)-beta-linkages between N-acetylmuramic acid and N-acetyl-D-glucosamine residues in a peptidoglycan and between N-acetyl-D-glucosamine residues in chitodextrins.. Bifunctional enzyme with lysozyme/chitinase activity. The chain is Bifunctional chitinase/lysozyme from Parthenocissus quinquefolia (Virginia creeper).